The chain runs to 274 residues: 2-dehydro-3-deoxyphosphooctonate aldolase (274 aa).

Belongs to the KdsA family.

It localises to the cytoplasm. The catalysed reaction is D-arabinose 5-phosphate + phosphoenolpyruvate + H2O = 3-deoxy-alpha-D-manno-2-octulosonate-8-phosphate + phosphate. It participates in carbohydrate biosynthesis; 3-deoxy-D-manno-octulosonate biosynthesis; 3-deoxy-D-manno-octulosonate from D-ribulose 5-phosphate: step 2/3. It functions in the pathway bacterial outer membrane biogenesis; lipopolysaccharide biosynthesis. In Rickettsia canadensis (strain McKiel), this protein is 2-dehydro-3-deoxyphosphooctonate aldolase.